A 347-amino-acid chain; its full sequence is S-adenosylmethionine:tRNA ribosyltransferase-isomerase (347 aa).

The protein belongs to the QueA family. Monomer.

Its subcellular location is the cytoplasm. The catalysed reaction is 7-aminomethyl-7-carbaguanosine(34) in tRNA + S-adenosyl-L-methionine = epoxyqueuosine(34) in tRNA + adenine + L-methionine + 2 H(+). The protein operates within tRNA modification; tRNA-queuosine biosynthesis. In terms of biological role, transfers and isomerizes the ribose moiety from AdoMet to the 7-aminomethyl group of 7-deazaguanine (preQ1-tRNA) to give epoxyqueuosine (oQ-tRNA). This is S-adenosylmethionine:tRNA ribosyltransferase-isomerase from Erythrobacter litoralis (strain HTCC2594).